Reading from the N-terminus, the 119-residue chain is Large ribosomal subunit protein bL20 (119 aa).

The protein belongs to the bacterial ribosomal protein bL20 family.

Its function is as follows. Binds directly to 23S ribosomal RNA and is necessary for the in vitro assembly process of the 50S ribosomal subunit. It is not involved in the protein synthesizing functions of that subunit. This chain is Large ribosomal subunit protein bL20, found in Caldicellulosiruptor bescii (strain ATCC BAA-1888 / DSM 6725 / KCTC 15123 / Z-1320) (Anaerocellum thermophilum).